We begin with the raw amino-acid sequence, 122 residues long: MKVSDRRKFEKANFDEFESALNNKNDLVHCPSITLFESIPTEVRSFYEDEKSGLIKVVKFRTGAMDRKRSFEKVVISVMVGKNVKKFLTFVEDEPDFQGGPIPSNKPRDGLHVVSSAYFEIQ.

This is an uncharacterized protein from Saccharomyces cerevisiae (strain ATCC 204508 / S288c) (Baker's yeast).